A 428-amino-acid chain; its full sequence is MKNWKTLLLGIAMIANTSFAAPQVVDKVAAVVNNGVVLESDVDGLMQSVKLNAAQARQQLPDDATLRHQIMERLIMDQIILQMGQKMGVKISDEQLDQAIANIAKQNNMTLDQMRSRLAYDGLNYNTYRNQIRKEMIISEVRNNEVRRRITILPQEVESLAQQVGNQNDASTELNLSHILIPLPENPTSDQVNEAESQARAIVDQARNGADFGKLAIAHSADQQALNGGQMGWGRIQELPGIFAQALSTAKKGDIVGPIRSGVGFHILKVNDLRGESKNISVTEVHARHILLKPSPIMTDEQARVKLEQIAADIKSGKTTFAAAAKEFSQDPGSANQGGDLGWATPDIFDPAFRDALTRLNKGQMSAPVHSSFGWHLIELLDTRNVDKTDAAQKDRAYRMLMNRKFSEEAASWMQEQRASAYVKILSN.

The N-terminal stretch at 1-20 (MKNWKTLLLGIAMIANTSFA) is a signal peptide. 2 consecutive PpiC domains span residues 171–272 (STEL…KVND) and 282–382 (VTEV…ELLD).

The protein resides in the periplasm. It catalyses the reaction [protein]-peptidylproline (omega=180) = [protein]-peptidylproline (omega=0). Its function is as follows. Chaperone involved in the correct folding and assembly of outer membrane proteins. Recognizes specific patterns of aromatic residues and the orientation of their side chains, which are found more frequently in integral outer membrane proteins. May act in both early periplasmic and late outer membrane-associated steps of protein maturation. This Escherichia coli O157:H7 protein is Chaperone SurA.